Reading from the N-terminus, the 503-residue chain is Maturase K (503 aa).

This sequence belongs to the intron maturase 2 family. MatK subfamily.

It localises to the plastid. It is found in the chloroplast. Usually encoded in the trnK tRNA gene intron. Probably assists in splicing its own and other chloroplast group II introns. This Syzygium australe (Brush cherry) protein is Maturase K.